A 241-amino-acid chain; its full sequence is Pyridoxine 5'-phosphate synthase (241 aa).

3-amino-2-oxopropyl phosphate is bound at residue asparagine 7. 9-10 (DH) contributes to the 1-deoxy-D-xylulose 5-phosphate binding site. Position 18 (arginine 18) interacts with 3-amino-2-oxopropyl phosphate. The active-site Proton acceptor is histidine 43. 2 residues coordinate 1-deoxy-D-xylulose 5-phosphate: arginine 45 and histidine 50. The Proton acceptor role is filled by glutamate 70. Position 100 (threonine 100) interacts with 1-deoxy-D-xylulose 5-phosphate. The Proton donor role is filled by histidine 191. Residues glycine 192 and 213–214 (GH) contribute to the 3-amino-2-oxopropyl phosphate site.

It belongs to the PNP synthase family. As to quaternary structure, homooctamer; tetramer of dimers.

Its subcellular location is the cytoplasm. It catalyses the reaction 3-amino-2-oxopropyl phosphate + 1-deoxy-D-xylulose 5-phosphate = pyridoxine 5'-phosphate + phosphate + 2 H2O + H(+). Its pathway is cofactor biosynthesis; pyridoxine 5'-phosphate biosynthesis; pyridoxine 5'-phosphate from D-erythrose 4-phosphate: step 5/5. Its function is as follows. Catalyzes the complicated ring closure reaction between the two acyclic compounds 1-deoxy-D-xylulose-5-phosphate (DXP) and 3-amino-2-oxopropyl phosphate (1-amino-acetone-3-phosphate or AAP) to form pyridoxine 5'-phosphate (PNP) and inorganic phosphate. The chain is Pyridoxine 5'-phosphate synthase from Nostoc punctiforme (strain ATCC 29133 / PCC 73102).